Here is a 51-residue protein sequence, read N- to C-terminus: Micropeptide inhibiting actin cytoskeleton (51 aa).

A disordered region spans residues 1–22; it reads MERAGVPGFSPRRSSVEAKMQS.

In terms of assembly, interacts with aquaporin AQP2.

Its function is as follows. Reduces filamentous actin fibers by interacting with aquaporin AQP2 which leads to inhibition of the expression of SEPTIN4 and integrin ITGB4. Also inhibits the activation of the EREG/EGFR signaling pathway through interaction with AQP2. This Homo sapiens (Human) protein is Micropeptide inhibiting actin cytoskeleton.